The primary structure comprises 225 residues: Transcription factor MYB1 (225 aa).

HTH myb-type domains follow at residues 11-67 (LGRV…KPSI) and 68-118 (KRGH…YKKH). 2 DNA-binding regions (H-T-H motif) span residues 39–63 (WKRV…LNYL) and 91–114 (WSLI…NTHL).

As to quaternary structure, no interactions with bHLH.

Its subcellular location is the nucleus. Its function is as follows. Activates DODA1 and CYP76AD1 in the betalain red pigment pathway. The chain is Transcription factor MYB1 from Beta vulgaris (Sugar beet).